The chain runs to 112 residues: T cell receptor alpha variable 2 (112 aa).

An N-terminal signal peptide occupies residues 1–25; that stretch reads MALQSTLGAVWLGLLLNSLWKVAES. The region spanning 26 to 112 is the Ig-like domain; sequence KDQVFQPSTV…DAAVYYCAVE (87 aa). A disulfide bond links Cys-47 and Cys-109. N-linked (GlcNAc...) asparagine glycosylation is found at Asn-48 and Asn-84.

In terms of assembly, alpha-beta TR is a heterodimer composed of an alpha and beta chain; disulfide-linked. The alpha-beta TR is associated with the transmembrane signaling CD3 coreceptor proteins to form the TR-CD3 (TcR or TCR). The assembly of alpha-beta TR heterodimers with CD3 occurs in the endoplasmic reticulum where a single alpha-beta TR heterodimer associates with one CD3D-CD3E heterodimer, one CD3G-CD3E heterodimer and one CD247 homodimer forming a stable octameric structure. CD3D-CD3E and CD3G-CD3E heterodimers preferentially associate with TR alpha and TR beta chains, respectively. The association of the CD247 homodimer is the last step of TcR assembly in the endoplasmic reticulum and is required for transport to the cell surface.

Its subcellular location is the cell membrane. V region of the variable domain of T cell receptor (TR) alpha chain that participates in the antigen recognition. Alpha-beta T cell receptors are antigen specific receptors which are essential to the immune response and are present on the cell surface of T lymphocytes. Recognize peptide-major histocompatibility (MH) (pMH) complexes that are displayed by antigen presenting cells (APC), a prerequisite for efficient T cell adaptive immunity against pathogens. Binding of alpha-beta TR to pMH complex initiates TR-CD3 clustering on the cell surface and intracellular activation of LCK that phosphorylates the ITAM motifs of CD3G, CD3D, CD3E and CD247 enabling the recruitment of ZAP70. In turn ZAP70 phosphorylates LAT, which recruits numerous signaling molecules to form the LAT signalosome. The LAT signalosome propagates signal branching to three major signaling pathways, the calcium, the mitogen-activated protein kinase (MAPK) kinase and the nuclear factor NF-kappa-B (NF-kB) pathways, leading to the mobilization of transcription factors that are critical for gene expression and essential for T cell growth and differentiation. The T cell repertoire is generated in the thymus, by V-(D)-J rearrangement. This repertoire is then shaped by intrathymic selection events to generate a peripheral T cell pool of self-MH restricted, non-autoaggressive T cells. Post-thymic interaction of alpha-beta TR with the pMH complexes shapes TR structural and functional avidity. This chain is T cell receptor alpha variable 2, found in Homo sapiens (Human).